A 284-amino-acid chain; its full sequence is 4-diphosphocytidyl-2-C-methyl-D-erythritol kinase (284 aa).

Lys10 is an active-site residue. 92–102 serves as a coordination point for ATP; sequence PYGAGLGSGSS. Asp134 is an active-site residue.

The protein belongs to the GHMP kinase family. IspE subfamily.

The catalysed reaction is 4-CDP-2-C-methyl-D-erythritol + ATP = 4-CDP-2-C-methyl-D-erythritol 2-phosphate + ADP + H(+). The protein operates within isoprenoid biosynthesis; isopentenyl diphosphate biosynthesis via DXP pathway; isopentenyl diphosphate from 1-deoxy-D-xylulose 5-phosphate: step 3/6. Catalyzes the phosphorylation of the position 2 hydroxy group of 4-diphosphocytidyl-2C-methyl-D-erythritol. The chain is 4-diphosphocytidyl-2-C-methyl-D-erythritol kinase from Salinibacter ruber (strain DSM 13855 / M31).